A 328-amino-acid polypeptide reads, in one-letter code: Bidirectional sugar transporter SWEET16 (328 aa).

The Extracellular segment spans residues 1–5 (MADPS). Residues 6–26 (FFVGIVGNVISILVFASPIAT) traverse the membrane as a helical segment. A MtN3/slv 1 domain is found at 6–92 (FFVGIVGNVI…TLYLAYAPRE (87 aa)). The Cytoplasmic portion of the chain corresponds to 27-38 (FRRIVRSKSTEE). A helical membrane pass occupies residues 39 to 56 (FRWLPYVTTLLSTSLWTF). At 57–63 (YGLHKPG) the chain is on the extracellular side. A helical transmembrane segment spans residues 64-84 (GLLIVTVNGSGAALEAIYVTL). Residues 85–99 (YLAYAPRETKAKMVK) are Cytoplasmic-facing. Residues 100–120 (VVLAVNVGALAAVVAVALVAL) form a helical membrane-spanning segment. At 121–125 (HGGVR) the chain is on the extracellular side. Residues 126–146 (LFVVGVLCAALTIGMYAAPMA) form a helical membrane-spanning segment. The region spanning 127–213 (FVVGVLCAAL…LYMAYRRTKK (87 aa)) is the MtN3/slv 2 domain. At 147–161 (AMRTVVKTRSVEYMP) the chain is on the cytoplasmic side. A helical transmembrane segment spans residues 162–182 (FSLSFFLFLNGGVWSVYSLLV). At 183–185 (KDY) the chain is on the extracellular side. A helical transmembrane segment spans residues 186–206 (FIGIPNAIGFALGTAQLALYM). Residues 207-328 (AYRRTKKPAG…ATTAGPGDRH (122 aa)) are Cytoplasmic-facing. The segment covering 288–299 (HQHHGGHHHHHR) has biased composition (basic residues). The tract at residues 288–328 (HQHHGGHHHHHRFDTVPDDDDEAVAAGGTTPATTAGPGDRH) is disordered. The span at 312 to 328 (AAGGTTPATTAGPGDRH) shows a compositional bias: low complexity.

This sequence belongs to the SWEET sugar transporter family. In terms of assembly, forms homooligomers and/or heterooligomers.

Its subcellular location is the cell membrane. Mediates both low-affinity uptake and efflux of sugar across the plasma membrane. The polypeptide is Bidirectional sugar transporter SWEET16 (SWEET16) (Oryza sativa subsp. japonica (Rice)).